The sequence spans 591 residues: Aspartate--tRNA(Asp/Asn) ligase (591 aa).

An L-aspartate-binding site is contributed by E175. An aspartate region spans residues 199–202 (QQFK). R221 and H453 together coordinate L-aspartate. 221–223 (RDE) provides a ligand contact to ATP. An ATP-binding site is contributed by E486. R493 serves as a coordination point for L-aspartate. Position 538-541 (538-541 (GIDR)) interacts with ATP.

The protein belongs to the class-II aminoacyl-tRNA synthetase family. Type 1 subfamily. In terms of assembly, homodimer.

Its subcellular location is the cytoplasm. The catalysed reaction is tRNA(Asx) + L-aspartate + ATP = L-aspartyl-tRNA(Asx) + AMP + diphosphate. Its function is as follows. Aspartyl-tRNA synthetase with relaxed tRNA specificity since it is able to aspartylate not only its cognate tRNA(Asp) but also tRNA(Asn). Reaction proceeds in two steps: L-aspartate is first activated by ATP to form Asp-AMP and then transferred to the acceptor end of tRNA(Asp/Asn). This Cereibacter sphaeroides (strain ATCC 17025 / ATH 2.4.3) (Rhodobacter sphaeroides) protein is Aspartate--tRNA(Asp/Asn) ligase.